The chain runs to 294 residues: tRNA dimethylallyltransferase (294 aa).

10–17 (GPTAVGKT) serves as a coordination point for ATP. Residue 12 to 17 (TAVGKT) coordinates substrate. An interaction with substrate tRNA region spans residues 35–38 (DSQQ).

The protein belongs to the IPP transferase family. Monomer. It depends on Mg(2+) as a cofactor.

The catalysed reaction is adenosine(37) in tRNA + dimethylallyl diphosphate = N(6)-dimethylallyladenosine(37) in tRNA + diphosphate. Catalyzes the transfer of a dimethylallyl group onto the adenine at position 37 in tRNAs that read codons beginning with uridine, leading to the formation of N6-(dimethylallyl)adenosine (i(6)A). The sequence is that of tRNA dimethylallyltransferase from Streptococcus sanguinis (strain SK36).